A 187-amino-acid chain; its full sequence is Elongation factor P (187 aa).

The protein belongs to the elongation factor P family.

It localises to the cytoplasm. It participates in protein biosynthesis; polypeptide chain elongation. Functionally, involved in peptide bond synthesis. Stimulates efficient translation and peptide-bond synthesis on native or reconstituted 70S ribosomes in vitro. Probably functions indirectly by altering the affinity of the ribosome for aminoacyl-tRNA, thus increasing their reactivity as acceptors for peptidyl transferase. In Desulfotalea psychrophila (strain LSv54 / DSM 12343), this protein is Elongation factor P.